The following is a 530-amino-acid chain: Sensor protein kinase PilS (530 aa).

Transmembrane regions (helical) follow at residues 25–37, 57–70, 76–98, 101–119, 124–144, and 156–174; these read LTIGLVLVLLISS, WCYLVFNILVALFL, LLPIFILALTDVLMLCGLFYAGG, PSGIGSLLVVAVAIANILL, GLVIAAAASLGLLYLTFFLSL, and AGGLGTLCFAAALVIQALV. The Cytoplasmic portion of the chain corresponds to 175–530; the sequence is RRQEQTETLA…ITFAHPRKLS (356 aa). Residues 196–260 form the PAS domain; sequence ELNALILQRM…KQWRLNPSLR (65 aa). The region spanning 316-527 is the Histidine kinase domain; that stretch reads GIAHEIRNPL…CFRITFAHPR (212 aa). Position 319 is a phosphohistidine; by autocatalysis (histidine 319).

In terms of assembly, interacts with PilA.

The protein resides in the cell inner membrane. It catalyses the reaction ATP + protein L-histidine = ADP + protein N-phospho-L-histidine.. In terms of biological role, member of the two-component regulatory system PilS/PilR that regulates the expression of multiple genes including the type IV pilus (T4P) major subunit PilA. Thereby, plays a major role in the regulation of multiple motility pathways. Functions as a membrane-associated protein kinase that phosphorylates PilR in response to environmental signals leading to activation of specific gene promoters including the pilin gene. The chain is Sensor protein kinase PilS (pilS) from Pseudomonas aeruginosa (strain ATCC 15692 / DSM 22644 / CIP 104116 / JCM 14847 / LMG 12228 / 1C / PRS 101 / PAO1).